The sequence spans 252 residues: 5'-nucleotidase SurE (252 aa).

Residues Asp-8, Asp-9, Ser-39, and Asn-91 each contribute to the a divalent metal cation site.

The protein belongs to the SurE nucleotidase family. Requires a divalent metal cation as cofactor.

The protein localises to the cytoplasm. It catalyses the reaction a ribonucleoside 5'-phosphate + H2O = a ribonucleoside + phosphate. In terms of biological role, nucleotidase that shows phosphatase activity on nucleoside 5'-monophosphates. This Bordetella pertussis (strain Tohama I / ATCC BAA-589 / NCTC 13251) protein is 5'-nucleotidase SurE.